The primary structure comprises 243 residues: Leucyl/phenylalanyl-tRNA--protein transferase (243 aa).

Belongs to the L/F-transferase family.

The protein localises to the cytoplasm. The enzyme catalyses N-terminal L-lysyl-[protein] + L-leucyl-tRNA(Leu) = N-terminal L-leucyl-L-lysyl-[protein] + tRNA(Leu) + H(+). It carries out the reaction N-terminal L-arginyl-[protein] + L-leucyl-tRNA(Leu) = N-terminal L-leucyl-L-arginyl-[protein] + tRNA(Leu) + H(+). It catalyses the reaction L-phenylalanyl-tRNA(Phe) + an N-terminal L-alpha-aminoacyl-[protein] = an N-terminal L-phenylalanyl-L-alpha-aminoacyl-[protein] + tRNA(Phe). Functions in the N-end rule pathway of protein degradation where it conjugates Leu, Phe and, less efficiently, Met from aminoacyl-tRNAs to the N-termini of proteins containing an N-terminal arginine or lysine. The chain is Leucyl/phenylalanyl-tRNA--protein transferase from Vibrio cholerae serotype O1 (strain ATCC 39541 / Classical Ogawa 395 / O395).